The following is a 328-amino-acid chain: DNA-directed RNA polymerase subunit alpha (328 aa).

The interval 1-244 is alpha N-terminal domain (alpha-NTD); sequence MEKFLKYEIK…EHLNPIVSVN (244 aa). Residues 261 to 328 form an alpha C-terminal domain (alpha-CTD) region; that stretch reads KVKSFAKQIE…VQELGLKFRS (68 aa).

This sequence belongs to the RNA polymerase alpha chain family. In terms of assembly, homodimer. The RNAP catalytic core consists of 2 alpha, 1 beta, 1 beta' and 1 omega subunit. When a sigma factor is associated with the core the holoenzyme is formed, which can initiate transcription.

The enzyme catalyses RNA(n) + a ribonucleoside 5'-triphosphate = RNA(n+1) + diphosphate. DNA-dependent RNA polymerase catalyzes the transcription of DNA into RNA using the four ribonucleoside triphosphates as substrates. The chain is DNA-directed RNA polymerase subunit alpha from Mycoplasma genitalium (strain ATCC 33530 / DSM 19775 / NCTC 10195 / G37) (Mycoplasmoides genitalium).